The chain runs to 367 residues: NADH-quinone oxidoreductase subunit D (367 aa).

It belongs to the complex I 49 kDa subunit family. As to quaternary structure, NDH-1 is composed of 14 different subunits. Subunits NuoB, C, D, E, F, and G constitute the peripheral sector of the complex.

It localises to the cell membrane. It catalyses the reaction a quinone + NADH + 5 H(+)(in) = a quinol + NAD(+) + 4 H(+)(out). Functionally, NDH-1 shuttles electrons from NADH, via FMN and iron-sulfur (Fe-S) centers, to quinones in the respiratory chain. The immediate electron acceptor for the enzyme in this species is believed to be ubiquinone. Couples the redox reaction to proton translocation (for every two electrons transferred, four hydrogen ions are translocated across the cytoplasmic membrane), and thus conserves the redox energy in a proton gradient. The sequence is that of NADH-quinone oxidoreductase subunit D from Dehalococcoides mccartyi (strain ATCC BAA-2100 / JCM 16839 / KCTC 5957 / BAV1).